The primary structure comprises 158 residues: Protein GLUTAMINE DUMPER 1 (158 aa).

Residues 1–36 (MRPLSVQSKFEDVATSTSVNHHGVTPQSPWHSPVPY) are Extracellular-facing. Residues 37–57 (LFGGLAAMLGLIAFALLILAC) traverse the membrane as a helical segment. At 58-158 (SYWRLSSSGE…DTGETTTTSH (101 aa)) the chain is on the cytoplasmic side. Residues 65–85 (SGEEDGQNVDEEKESRSGDKA) are disordered. Positions 66-76 (GEEDGQNVDEE) are enriched in acidic residues. Positions 96–100 (VIMAG) match the VIMAG motif. The segment at 126–158 (ISQEESVAKEEEKMREGEEEKVKDTGETTTTSH) is disordered. Over residues 131-151 (SVAKEEEKMREGEEEKVKDTG) the composition is skewed to basic and acidic residues.

The protein belongs to the GLUTAMINE DUMPER 1 (TC 9.B.60) family. Interacts with LOG2. Ubiquitinated by LOG2 (in vitro). Expressed in the vascular tissues and in hydathodes. Expressed in the phloem and xylem (at the protein level).

It is found in the cell membrane. In terms of biological role, probable subunit of an amino acid transporter involved in the regulation of the amino acid metabolism. Stimulates amino acid export by activating nonselective amino acid facilitators. Required the interaction with the RING-type E3 ubiquitin-protein ligase LOG2 to fulfill its function. Plays a role in the Gln export at hydathodes, at xylem parenchyma into xylem sap and from mesophyll into leaf apoplasm. Acts upstream genes involved in the salicylic acid (SA) pathway and in the geminivirus-host interaction. The sequence is that of Protein GLUTAMINE DUMPER 1 (GDU1) from Arabidopsis thaliana (Mouse-ear cress).